Reading from the N-terminus, the 370-residue chain is Queuine tRNA-ribosyltransferase (370 aa).

The active-site Proton acceptor is the Asp93. Residues 93–97, Asp147, Gln190, and Gly217 contribute to the substrate site; that span reads DSGGF. Positions 248 to 254 are RNA binding; the sequence is GVGTPDY. The active-site Nucleophile is the Asp267. The tract at residues 272-276 is RNA binding; important for wobble base 34 recognition; sequence TRVAR. Zn(2+) is bound by residues Cys305, Cys307, Cys310, and His336.

It belongs to the queuine tRNA-ribosyltransferase family. As to quaternary structure, homodimer. Within each dimer, one monomer is responsible for RNA recognition and catalysis, while the other monomer binds to the replacement base PreQ1. Requires Zn(2+) as cofactor.

The enzyme catalyses 7-aminomethyl-7-carbaguanine + guanosine(34) in tRNA = 7-aminomethyl-7-carbaguanosine(34) in tRNA + guanine. It participates in tRNA modification; tRNA-queuosine biosynthesis. Its function is as follows. Catalyzes the base-exchange of a guanine (G) residue with the queuine precursor 7-aminomethyl-7-deazaguanine (PreQ1) at position 34 (anticodon wobble position) in tRNAs with GU(N) anticodons (tRNA-Asp, -Asn, -His and -Tyr). Catalysis occurs through a double-displacement mechanism. The nucleophile active site attacks the C1' of nucleotide 34 to detach the guanine base from the RNA, forming a covalent enzyme-RNA intermediate. The proton acceptor active site deprotonates the incoming PreQ1, allowing a nucleophilic attack on the C1' of the ribose to form the product. After dissociation, two additional enzymatic reactions on the tRNA convert PreQ1 to queuine (Q), resulting in the hypermodified nucleoside queuosine (7-(((4,5-cis-dihydroxy-2-cyclopenten-1-yl)amino)methyl)-7-deazaguanosine). The polypeptide is Queuine tRNA-ribosyltransferase (Natranaerobius thermophilus (strain ATCC BAA-1301 / DSM 18059 / JW/NM-WN-LF)).